Reading from the N-terminus, the 219-residue chain is Flagellin B4 (219 aa).

Positions 1–5 are excised as a propeptide; sequence MHRKG.

This sequence belongs to the archaeal flagellin family.

The protein localises to the archaeal flagellum. Functionally, flagellin is the subunit protein which polymerizes to form the filaments of archaeal flagella. The protein is Flagellin B4 (flaB4) of Pyrococcus abyssi (strain GE5 / Orsay).